An 82-amino-acid chain; its full sequence is Probable 26S proteasome complex subunit dss-1 (82 aa).

Positions N56–A82 are disordered. Positions E63–K76 are enriched in basic and acidic residues.

This sequence belongs to the DSS1/SEM1 family. Part of the 26S proteasome. As to expression, expressed in intestinal epithelium and head neurons.

The protein localises to the nucleus. Its subcellular location is the cytoplasm. Its function is as follows. Subunit of the 26S proteasome which plays a role in ubiquitin-dependent proteolysis. Has an essential role in oogenesis and larval growth. Required for intestinal function and default lifespan. The protein is Probable 26S proteasome complex subunit dss-1 (dss-1) of Caenorhabditis elegans.